A 302-amino-acid chain; its full sequence is 3-methyl-2-oxobutanoate hydroxymethyltransferase 1 (302 aa).

Mg(2+)-binding residues include D75 and D118. 3-methyl-2-oxobutanoate is bound by residues 75–76 (DS), D118, and K147. E149 is a Mg(2+) binding site. E217 acts as the Proton acceptor in catalysis.

The protein belongs to the PanB family. As to quaternary structure, homodecamer; pentamer of dimers. Requires Mg(2+) as cofactor.

It is found in the cytoplasm. The catalysed reaction is 3-methyl-2-oxobutanoate + (6R)-5,10-methylene-5,6,7,8-tetrahydrofolate + H2O = 2-dehydropantoate + (6S)-5,6,7,8-tetrahydrofolate. The protein operates within cofactor biosynthesis; (R)-pantothenate biosynthesis; (R)-pantoate from 3-methyl-2-oxobutanoate: step 1/2. Functionally, catalyzes the reversible reaction in which hydroxymethyl group from 5,10-methylenetetrahydrofolate is transferred onto alpha-ketoisovalerate to form ketopantoate. In Zymomonas mobilis subsp. mobilis (strain ATCC 31821 / ZM4 / CP4), this protein is 3-methyl-2-oxobutanoate hydroxymethyltransferase 1.